We begin with the raw amino-acid sequence, 882 residues long: Lon protease homolog, mitochondrial (882 aa).

The transit peptide at 1-34 (MIHVLKSRSTLLTASSIVRTSVGSSSRYSQTRTY) directs the protein to the mitochondrion. Residues 68–281 (TLGLPLVSRP…KALVLLNRER (214 aa)) enclose the Lon N-terminal domain. 435-442 (GPPGTGKT) serves as a coordination point for ATP. The Lon proteolytic domain maps to 687-878 (PLPHGIVMGL…DKVYEVAFSS (192 aa)). Residues Ser784 and Lys827 contribute to the active site.

Belongs to the peptidase S16 family. As to quaternary structure, homohexamer or homoheptamer. Organized in a ring with a central cavity.

It is found in the mitochondrion matrix. It catalyses the reaction Hydrolysis of proteins in presence of ATP.. Functionally, ATP-dependent serine protease that mediates the selective degradation of misfolded, unassembled or oxidatively damaged polypeptides as well as certain short-lived regulatory proteins in the mitochondrial matrix. May also have a chaperone function in the assembly of inner membrane protein complexes. Participates in the regulation of mitochondrial gene expression and in the maintenance of the integrity of the mitochondrial genome. Binds to mitochondrial DNA in a site-specific manner. This is Lon protease homolog, mitochondrial from Phaeodactylum tricornutum (strain CCAP 1055/1).